Here is a 587-residue protein sequence, read N- to C-terminus: Aspartate--tRNA ligase (587 aa).

Position 174 (Glu-174) interacts with L-aspartate. The interval 198–201 (QITK) is aspartate. Arg-220 contributes to the L-aspartate binding site. ATP-binding positions include 220–222 (RDE) and Gln-229. His-443 serves as a coordination point for L-aspartate. Glu-477 is an ATP binding site. Residue Arg-484 coordinates L-aspartate. 529-532 (GLDR) contacts ATP.

This sequence belongs to the class-II aminoacyl-tRNA synthetase family. Type 1 subfamily. Homodimer.

The protein localises to the cytoplasm. The catalysed reaction is tRNA(Asp) + L-aspartate + ATP = L-aspartyl-tRNA(Asp) + AMP + diphosphate. In terms of biological role, catalyzes the attachment of L-aspartate to tRNA(Asp) in a two-step reaction: L-aspartate is first activated by ATP to form Asp-AMP and then transferred to the acceptor end of tRNA(Asp). This is Aspartate--tRNA ligase from Streptococcus pneumoniae (strain Taiwan19F-14).